A 380-amino-acid polypeptide reads, in one-letter code: L-prolyl-[peptidyl-carrier protein] dehydrogenase (380 aa).

Glutamate 243 (proton acceptor) is an active-site residue. Positions 269 and 280 each coordinate FAD.

The protein belongs to the acyl-CoA dehydrogenase family. FAD serves as cofactor.

The catalysed reaction is L-prolyl-[peptidyl-carrier protein] + 2 oxidized [electron-transfer flavoprotein] + H(+) = (1H-pyrrole-2-carbonyl)-[peptidyl-carrier protein] + 2 reduced [electron-transfer flavoprotein]. Involved in the biosynthesis of pyoluteorin. Catalyzes the desaturation of the L-prolyl-[PltL] to yield 1H-pyrrole-2-carbonyl-[PltL]. This Pseudomonas fluorescens (strain ATCC BAA-477 / NRRL B-23932 / Pf-5) protein is L-prolyl-[peptidyl-carrier protein] dehydrogenase.